The primary structure comprises 152 residues: MSNMYCGIGKVPKGKERGTPEHCFQSNQIRYYGIKKIDKSLLEKPKKKRLSLIKEQTKLNNLLEKGKRMVKEANKLKSIINDPESSKTEIRNAKKKLEKIVAKKNKFVLELKQQRQVVDELLEEEREKEKAERKAEKAKKNKKKSSTKTKKK.

Positions 127–152 (EKEKAERKAEKAKKNKKKSSTKTKKK) are disordered. Positions 136–152 (EKAKKNKKKSSTKTKKK) are enriched in basic residues.

Belongs to the mimivirus R546 family.

This is an uncharacterized protein from Sputnik virophage.